A 486-amino-acid chain; its full sequence is Cysteine--tRNA ligase (486 aa).

Cys-30 is a binding site for Zn(2+). Residues 32–42 (PTVYDRAHLGN) carry the 'HIGH' region motif. 3 residues coordinate Zn(2+): Cys-221, His-246, and Glu-250. The 'KMSKS' region motif lies at 279–283 (KMSKS). ATP is bound at residue Lys-282.

It belongs to the class-I aminoacyl-tRNA synthetase family. Monomer. The cofactor is Zn(2+).

The protein resides in the cytoplasm. It carries out the reaction tRNA(Cys) + L-cysteine + ATP = L-cysteinyl-tRNA(Cys) + AMP + diphosphate. In Cereibacter sphaeroides (strain ATCC 17029 / ATH 2.4.9) (Rhodobacter sphaeroides), this protein is Cysteine--tRNA ligase.